Reading from the N-terminus, the 663-residue chain is Polyunsaturated fatty acid lipoxygenase ALOX12 (663 aa).

One can recognise a PLAT domain in the interval 2–114 (GRYRVRVVTG…ILSLPEGTAR (113 aa)). A Lipoxygenase domain is found at 115 to 663 (LAGDNALDVF…PSRIENSITI (549 aa)). A Phosphoserine modification is found at S246. 5 residues coordinate Fe cation: H360, H365, H540, N544, and I663.

This sequence belongs to the lipoxygenase family. It depends on Fe cation as a cofactor. Found primarily in platelets and in microsomal and cytosolic fractions of the epidermis (at protein level).

The protein resides in the cytoplasm. The protein localises to the cytosol. It localises to the membrane. The enzyme catalyses (5Z,8Z,11Z,14Z)-eicosatetraenoate + O2 = (12S)-hydroperoxy-(5Z,8Z,10E,14Z)-eicosatetraenoate. It carries out the reaction (9Z,12Z)-octadecadienoate + O2 = (13S)-hydroperoxy-(9Z,11E)-octadecadienoate. It catalyses the reaction 2 leukotriene A4 + O2 + 2 H2O = 2 lipoxin A4. The catalysed reaction is 2 leukotriene A4 + O2 + 2 H2O = 2 lipoxin B4. The enzyme catalyses (5Z,8Z,11Z)-eicosatrienoate + O2 = (12S)-hydroperoxy-(5Z,8Z,10E)-eicosatrienoate. It carries out the reaction (8Z,11Z,14Z)-eicosatrienoate + O2 = (12S)-hydroperoxy-(8Z,10E,14Z)-eicosatrienoate. It catalyses the reaction (4Z,7Z,10Z,13Z,16Z,19Z)-docosahexaenoate + O2 = (14S)-hydroperoxy-(4Z,7Z,10Z,12E,16Z,19Z)-docosahexaenoate. The catalysed reaction is (7S)-hydroperoxy-(4Z,8E,10Z,13Z,16Z,19Z)-docosahexaenoate + O2 = (7S,14S)-dihydroperoxy-(4Z,8E,10Z,12E,16Z,19Z)-docosahexaenoate. The enzyme catalyses (7S)-hydroperoxy-(4Z,8E,10Z,13Z,16Z,19Z)-docosahexaenoate + O2 = (7S,17S)-dihydroperoxy-(4Z,8E,10Z,13Z,15E,19Z)-docosahexaenoate. It carries out the reaction (14R,15S)-epoxy-(5Z,8Z,11Z)-eicosatrienoate + O2 = (12S)-hydroperoxy-(14R,15S)-epoxy-(5Z,8Z,10E)-eicosatrienoate. It catalyses the reaction (14S,15R)-epoxy-(5Z,8Z,11Z)-eicosatrienoate + O2 = (12S)-hydroperoxy-(14S,15R)-epoxy-(5Z,8Z,10E)-eicosatrienoate. The catalysed reaction is (5Z,8Z,11Z,14Z)-eicosatetraenoate + O2 = (15S)-hydroperoxy-(5Z,8Z,11Z,13E)-eicosatetraenoate. The enzyme catalyses (14S)-hydroperoxy-(4Z,7Z,10Z,12E,16Z,19Z)-docosahexaenoate = (13S,14S)-epoxy-(4Z,7Z,9E,11E,16Z,19Z)-docosahexaenoate + H2O. It carries out the reaction N-(5Z,8Z,11Z,14Z)-eicosatetraenoyl-L-alanine + O2 = N-(15S)-hydroperoxy-(5Z,8Z,11Z,13E)-eicosatetraenoyl-alanine. It catalyses the reaction N-(5Z,8Z,11Z,14Z)-eicosatetraenoyl-L-alanine + O2 = N-(12S)-hydroperoxy-(5Z,8Z,10E,14Z)-eicosatetraenoyl-alanine. The catalysed reaction is N-(5Z,8Z,11Z,14Z)-eicosatetraenoyl-gamma-aminobutanoate + O2 = N-(15S)-hydroperoxy-(5Z,8Z,11Z,13E)-eicosatetraenoyl-gamma-aminobutanoate. The enzyme catalyses N-(5Z,8Z,11Z,14Z)-eicosatetraenoyl-gamma-aminobutanoate + O2 = N-(12S)-hydroperoxy-(5Z,8Z,10E,14Z)-eicosatetraenoyl-gamma-aminobutanoate. It carries out the reaction N-(5Z,8Z,11Z,14Z)-eicosatetraenoyl-glycine + O2 = N-(15S)-hydroperoxy-(5Z,8Z,11Z,13E)-eicosatetraenoyl-glycine. It catalyses the reaction N-(5Z,8Z,11Z,14Z)-eicosatetraenoyl-glycine + O2 = N-(12S)-hydroperoxy-(5Z,8Z,10E,14Z)-eicosatetraenoyl-glycine. The catalysed reaction is N-(5Z,8Z,11Z,14Z)-eicosatetraenoyl-taurine + O2 = N-(12S)-hydroperoxy-(5Z,8Z,10E,14Z)-eicosatetraenoyl-taurine. The enzyme catalyses N-(5Z,8Z,11Z,14Z)-eicosatetraenoyl-taurine + O2 = N-(15S)-hydroperoxy-(5Z,8Z,11Z,13E)-eicosatetraenoyl-taurine. It carries out the reaction (5Z,8Z,11Z,14Z,17Z)-eicosapentaenoate + O2 = (12S)-hydroperoxy-(5Z,8Z,10E,14Z,17Z)-eicosapentaenoate. Its pathway is lipid metabolism; hydroperoxy eicosatetraenoic acid biosynthesis. Its activity is regulated as follows. Activated by EGF. Arachidonic acid conversion is inhibited by (13S,14S)-epoxy-(4Z,7Z,9E,11E,16Z,19Z)-docosahexaenoate (13S,14S-epoxy-DHA). Arachidonate 12-lipoxygenase activity is decreased when PH decreases from 7.4 to 6. In terms of biological role, catalyzes the regio and stereo-specific incorporation of molecular oxygen into free and esterified polyunsaturated fatty acids generating lipid hydroperoxides that can be further reduced to the corresponding hydroxy species. Mainly converts arachidonate ((5Z,8Z,11Z,14Z)-eicosatetraenoate) to the specific bioactive lipid (12S)-hydroperoxyeicosatetraenoate/(12S)-HPETE. Through the production of bioactive lipids like (12S)-HPETE it regulates different biological processes including platelet activation. It can also catalyze the epoxidation of double bonds of polyunsaturated fatty acids such as (14S)-hydroperoxy-docosahexaenoate/(14S)-HPDHA resulting in the formation of (13S,14S)-epoxy-DHA. Furthermore, it may participate in the sequential oxidations of DHA ((4Z,7Z,10Z,13Z,16Z,19Z)-docosahexaenoate) to generate specialized pro-resolving mediators (SPMs) like resolvin D5 ((7S,17S)-diHPDHA) and (7S,14S)-diHPDHA, that actively down-regulate the immune response and have anti-aggregation properties with platelets. An additional function involves a multistep process by which it transforms leukotriene A4/LTA4 into the bioactive lipids lipoxin A4/LXA4 and lipoxin B4/LXB4, both are vasoactive and LXA4 may regulate neutrophil function via occupancy of specific recognition sites. Can also peroxidize linoleate ((9Z,12Z)-octadecadienoate) to (13S)-hydroperoxyoctadecadienoate/ (13S-HPODE). Due to its role in regulating both the expression of the vascular endothelial growth factor (VEGF, an angiogenic factor involved in the survival and metastasis of solid tumors) and the expression of integrin beta-1 (known to affect tumor cell migration and proliferation), it can be regarded as protumorigenic. Important for cell survival, as it may play a role not only in proliferation but also in the prevention of apoptosis in vascular smooth muscle cells. The sequence is that of Polyunsaturated fatty acid lipoxygenase ALOX12 (Alox12) from Mus musculus (Mouse).